The chain runs to 337 residues: MNTTVATSPITVLGAGSYGTALAIAFSRNGFPTYLWGHDPVHMQRLSEERQNNAFLPNIAFPDALHIEFDLASALSQSRDLLIVVPSHVFGEVIDKIKPYLRPDHRIAWATKGLERNTGRLLQEVIEEKLGTQHPLAVLSGPTFAKELAAGLPTAIALASNNEQFALEFQARIHCSKHFRVYINQDMIGVQLGGAIKNVIAISAGMSDGMGFGANARTALITRGIAEISRLGASLGANPNTFMGMSGLGDLVLTCTDDQSRNRRFGIMLGQGFSAQTAMDNIGQVVEGFYNAKEAYLLAQRQGIEMPITEQVYQVLFCGKNAQDVAASLLGRERKGE.

Positions 17, 18, 38, and 112 each coordinate NADPH. Lys112, Gly141, and Thr143 together coordinate sn-glycerol 3-phosphate. Residue Ala145 participates in NADPH binding. The sn-glycerol 3-phosphate site is built by Lys197, Asp250, Ser260, Arg261, and Asn262. Residue Lys197 is the Proton acceptor of the active site. Arg261 contacts NADPH. NADPH is bound by residues Val285 and Glu287.

Belongs to the NAD-dependent glycerol-3-phosphate dehydrogenase family.

Its subcellular location is the cytoplasm. It carries out the reaction sn-glycerol 3-phosphate + NAD(+) = dihydroxyacetone phosphate + NADH + H(+). The enzyme catalyses sn-glycerol 3-phosphate + NADP(+) = dihydroxyacetone phosphate + NADPH + H(+). It functions in the pathway membrane lipid metabolism; glycerophospholipid metabolism. Catalyzes the reduction of the glycolytic intermediate dihydroxyacetone phosphate (DHAP) to sn-glycerol 3-phosphate (G3P), the key precursor for phospholipid synthesis. This is Glycerol-3-phosphate dehydrogenase [NAD(P)+] from Pasteurella multocida (strain Pm70).